The chain runs to 923 residues: Mitochondrial 10-formyltetrahydrofolate dehydrogenase (923 aa).

The transit peptide at 1–19 (MLRRGSQALRRFSTGRVYF) directs the protein to the mitochondrion; not cleaved. A hydrolase domain region spans residues 23-331 (LKLALIGQSL…PASQYFSTGE (309 aa)). Serine 31 bears the Phosphoserine mark. Lysine 60 bears the N6-succinyllysine mark. 110–112 (QFI) serves as a coordination point for (6R)-10-formyltetrahydrofolate. Residue histidine 128 is the Proton donor of the active site. A (6R)-10-formyltetrahydrofolate-binding site is contributed by aspartate 164. The Carrier domain maps to 339 to 416 (AEEVKVAETI…GFIQKVVRKL (78 aa)). The residue at position 375 (serine 375) is an O-(pantetheine 4'-phosphoryl)serine. An aldehyde dehydrogenase domain region spans residues 438-923 (MVKMPYQCFI…LKTKTVTLEY (486 aa)). NADP(+) contacts are provided by residues 592–594 (IPW) and 618–621 (KPAQ). Serine 650 is subject to Phosphoserine. Residues 651–656 (GGIAGQ) and 671–672 (GS) contribute to the NADP(+) site. Lysine 681 bears the N6-succinyllysine mark. Glutamate 694 acts as the Proton acceptor in catalysis. 694 to 695 (EL) provides a ligand contact to NADP(+). Cysteine 728 (proton donor) is an active-site residue. Residue lysine 778 coordinates NADP(+). Lysine 788 carries the N6-succinyllysine modification. Residue 825–827 (ESF) coordinates NADP(+). The residue at position 903 (lysine 903) is an N6-acetyllysine.

In the N-terminal section; belongs to the GART family. It in the C-terminal section; belongs to the aldehyde dehydrogenase family. ALDH1L subfamily. Post-translationally, phosphopantetheinylation at Ser-375 by AASDHPPT is required for the formyltetrahydrofolate dehydrogenase activity. Highly expressed in pancreas, heart, brain and skeletal muscle.

The protein localises to the mitochondrion. The enzyme catalyses (6R)-10-formyltetrahydrofolate + NADP(+) + H2O = (6S)-5,6,7,8-tetrahydrofolate + CO2 + NADPH + H(+). In terms of biological role, mitochondrial 10-formyltetrahydrofolate dehydrogenase that catalyzes the NADP(+)-dependent conversion of 10-formyltetrahydrofolate to tetrahydrofolate and carbon dioxide. The sequence is that of Mitochondrial 10-formyltetrahydrofolate dehydrogenase from Homo sapiens (Human).